A 362-amino-acid chain; its full sequence is DNA replication and repair protein RecF (362 aa).

Glycine 30–threonine 37 serves as a coordination point for ATP.

The protein belongs to the RecF family.

Its subcellular location is the cytoplasm. Functionally, the RecF protein is involved in DNA metabolism; it is required for DNA replication and normal SOS inducibility. RecF binds preferentially to single-stranded, linear DNA. It also seems to bind ATP. The chain is DNA replication and repair protein RecF from Xanthomonas oryzae pv. oryzae (strain MAFF 311018).